Consider the following 273-residue polypeptide: 4-hydroxy-tetrahydrodipicolinate reductase (273 aa).

NAD(+) is bound by residues 12 to 17 (GAGGRM) and E38. NADP(+) is bound at residue R39. NAD(+) contacts are provided by residues 102 to 104 (GTT) and 126 to 129 (AANF). H159 serves as the catalytic Proton donor/acceptor. Residue H160 coordinates (S)-2,3,4,5-tetrahydrodipicolinate. The active-site Proton donor is K163. Residue 169–170 (GT) participates in (S)-2,3,4,5-tetrahydrodipicolinate binding.

It belongs to the DapB family. In terms of assembly, homotetramer.

It is found in the cytoplasm. The enzyme catalyses (S)-2,3,4,5-tetrahydrodipicolinate + NAD(+) + H2O = (2S,4S)-4-hydroxy-2,3,4,5-tetrahydrodipicolinate + NADH + H(+). It carries out the reaction (S)-2,3,4,5-tetrahydrodipicolinate + NADP(+) + H2O = (2S,4S)-4-hydroxy-2,3,4,5-tetrahydrodipicolinate + NADPH + H(+). It functions in the pathway amino-acid biosynthesis; L-lysine biosynthesis via DAP pathway; (S)-tetrahydrodipicolinate from L-aspartate: step 4/4. Catalyzes the conversion of 4-hydroxy-tetrahydrodipicolinate (HTPA) to tetrahydrodipicolinate. The protein is 4-hydroxy-tetrahydrodipicolinate reductase of Photorhabdus laumondii subsp. laumondii (strain DSM 15139 / CIP 105565 / TT01) (Photorhabdus luminescens subsp. laumondii).